Consider the following 275-residue polypeptide: MQAKSICFIGGGNMAQAIIFGLLKQGYPANQITVSDPNAAKRQCLAEKGVNTVEASQTDTQDAVETSEVLLLAVKPQMIAAVCQGLSAVDFSQKLVISIAAGVSVTKLQSRLPTAKQIVRVMPNTPALVAEGMSGLFAQNSLKPEYKQFTQDLLNAVGKTCWVTQEADMHTITAGSGSSPAYFFLFMEAMQQALCQMNMDEDTARLLVQQSALGAAKMVIENPDLPIATLRENVTSKGGTTAAALQVLNQQQLQHIVQQAMQACVERSQQMEKLF.

Belongs to the pyrroline-5-carboxylate reductase family.

Its subcellular location is the cytoplasm. It carries out the reaction L-proline + NADP(+) = (S)-1-pyrroline-5-carboxylate + NADPH + 2 H(+). The enzyme catalyses L-proline + NAD(+) = (S)-1-pyrroline-5-carboxylate + NADH + 2 H(+). Its pathway is amino-acid biosynthesis; L-proline biosynthesis; L-proline from L-glutamate 5-semialdehyde: step 1/1. Its function is as follows. Catalyzes the reduction of 1-pyrroline-5-carboxylate (PCA) to L-proline. The polypeptide is Pyrroline-5-carboxylate reductase (Pasteurella multocida (strain Pm70)).